The primary structure comprises 399 residues: Protein IQ-DOMAIN 25 (399 aa).

The short motif at 1 to 8 (MRKNLTKL) is the Nuclear localization signal element. Calmodulin-binding regions lie at residues 81–91 (KERRTHAIAVA) and 99–110 (DAAVAAAKAAAA). IQ domains follow at residues 130 to 158 (EHRAAMQIQCAFRGYLARKALRALRGVVK) and 159 to 181 (IQALVRGFLVRNQAAATLRSMEA). 3 disordered regions span residues 198–219 (NGNAAPARKSTERFSGSLENRN), 262–302 (SPLS…SPAR), and 346–377 (LRSHSAPRQRPESNASAGGWRRSIGGGGVRMQ). Polar residues predominate over residues 285–294 (KFPTAQSTPR).

The protein belongs to the IQD family. As to quaternary structure, binds to multiple calmodulin (CaM) in the presence of Ca(2+) and CaM-like proteins.

It localises to the nucleus. The protein localises to the cell membrane. In terms of biological role, may be involved in cooperative interactions with calmodulins or calmodulin-like proteins. Recruits calmodulin proteins to microtubules, thus being a potential scaffold in cellular signaling and trafficking. May associate with nucleic acids and regulate gene expression at the transcriptional or post-transcriptional level. The chain is Protein IQ-DOMAIN 25 from Arabidopsis thaliana (Mouse-ear cress).